The following is a 431-amino-acid chain: Leucine carboxyl methyltransferase 1 (431 aa).

S-adenosyl-L-methionine-binding positions include Arg-103, Gly-131, Asp-159, and 219–220 (DL). The segment at 228-268 (QPQQPLPPGVPIGSRGLHASPFTPGSTTQHEEQTEETSLPQ) is disordered. Glu-289 is an S-adenosyl-L-methionine binding site.

Belongs to the methyltransferase superfamily. LCMT family.

The catalysed reaction is [phosphatase 2A protein]-C-terminal L-leucine + S-adenosyl-L-methionine = [phosphatase 2A protein]-C-terminal L-leucine methyl ester + S-adenosyl-L-homocysteine. Its function is as follows. Methylates the carboxyl group of the C-terminal leucine residue of protein phosphatase 2A catalytic subunits to form alpha-leucine ester residues. This Neurospora crassa (strain ATCC 24698 / 74-OR23-1A / CBS 708.71 / DSM 1257 / FGSC 987) protein is Leucine carboxyl methyltransferase 1 (ppm-1).